The following is a 283-amino-acid chain: MLRVAVPNKGSLSESAAEILSEAGYRRRTDSRDLTVLDPANQVEFFFLRPKDIAIYVGSGELDLGITGRDLAGDSGAPVSERLSLGFGRSSFRYAAPAGKDWAVEDLSGLRIATSYPNLVRKDLTDRGLDATVIRLDGAVEISIQLGVADAIADVVGSGRTLRQHNLVAFGESLCDSEGVLIERTGAPQDDPARNQLIERVRGIVFAQQNLMIDYDCPRTILDDAIKMTPGMESPTLSPLADPDWVAVRAMVPIKGHNQVMDALAELGAKAILASNIRSVRAF.

The protein belongs to the ATP phosphoribosyltransferase family. Long subfamily. Mg(2+) is required as a cofactor.

It is found in the cytoplasm. The catalysed reaction is 1-(5-phospho-beta-D-ribosyl)-ATP + diphosphate = 5-phospho-alpha-D-ribose 1-diphosphate + ATP. It functions in the pathway amino-acid biosynthesis; L-histidine biosynthesis; L-histidine from 5-phospho-alpha-D-ribose 1-diphosphate: step 1/9. With respect to regulation, feedback inhibited by histidine. In terms of biological role, catalyzes the condensation of ATP and 5-phosphoribose 1-diphosphate to form N'-(5'-phosphoribosyl)-ATP (PR-ATP). Has a crucial role in the pathway because the rate of histidine biosynthesis seems to be controlled primarily by regulation of HisG enzymatic activity. The sequence is that of ATP phosphoribosyltransferase from Rhodococcus erythropolis (strain PR4 / NBRC 100887).